The chain runs to 92 residues: MVRSVWKGPFVEGSLLKKADAARASGRHDVIKIWSRRSTILPQFVGLVFGVYNGQKHVPVSVNEEMVGHKFGEFSPTRTFHGHSGDKKAKRS.

It belongs to the universal ribosomal protein uS19 family.

Functionally, protein S19 forms a complex with S13 that binds strongly to the 16S ribosomal RNA. This Nitrobacter winogradskyi (strain ATCC 25391 / DSM 10237 / CIP 104748 / NCIMB 11846 / Nb-255) protein is Small ribosomal subunit protein uS19.